The sequence spans 316 residues: 4-hydroxy-3-methylbut-2-enyl diphosphate reductase (316 aa).

Cys-12 provides a ligand contact to [4Fe-4S] cluster. (2E)-4-hydroxy-3-methylbut-2-enyl diphosphate-binding residues include His-41 and His-74. Residues His-41 and His-74 each contribute to the dimethylallyl diphosphate site. The isopentenyl diphosphate site is built by His-41 and His-74. Residue Cys-96 coordinates [4Fe-4S] cluster. His-124 is a binding site for (2E)-4-hydroxy-3-methylbut-2-enyl diphosphate. His-124 contacts dimethylallyl diphosphate. His-124 contributes to the isopentenyl diphosphate binding site. Glu-126 acts as the Proton donor in catalysis. (2E)-4-hydroxy-3-methylbut-2-enyl diphosphate is bound at residue Thr-167. Cys-197 provides a ligand contact to [4Fe-4S] cluster. The (2E)-4-hydroxy-3-methylbut-2-enyl diphosphate site is built by Ser-225, Ser-226, Asn-227, and Ser-269. 4 residues coordinate dimethylallyl diphosphate: Ser-225, Ser-226, Asn-227, and Ser-269. The isopentenyl diphosphate site is built by Ser-225, Ser-226, Asn-227, and Ser-269.

The protein belongs to the IspH family. In terms of assembly, homodimer. [4Fe-4S] cluster serves as cofactor.

The enzyme catalyses isopentenyl diphosphate + 2 oxidized [2Fe-2S]-[ferredoxin] + H2O = (2E)-4-hydroxy-3-methylbut-2-enyl diphosphate + 2 reduced [2Fe-2S]-[ferredoxin] + 2 H(+). It carries out the reaction dimethylallyl diphosphate + 2 oxidized [2Fe-2S]-[ferredoxin] + H2O = (2E)-4-hydroxy-3-methylbut-2-enyl diphosphate + 2 reduced [2Fe-2S]-[ferredoxin] + 2 H(+). It participates in isoprenoid biosynthesis; dimethylallyl diphosphate biosynthesis; dimethylallyl diphosphate from (2E)-4-hydroxy-3-methylbutenyl diphosphate: step 1/1. Its pathway is isoprenoid biosynthesis; isopentenyl diphosphate biosynthesis via DXP pathway; isopentenyl diphosphate from 1-deoxy-D-xylulose 5-phosphate: step 6/6. Functionally, catalyzes the conversion of 1-hydroxy-2-methyl-2-(E)-butenyl 4-diphosphate (HMBPP) into a mixture of isopentenyl diphosphate (IPP) and dimethylallyl diphosphate (DMAPP). Acts in the terminal step of the DOXP/MEP pathway for isoprenoid precursor biosynthesis. The sequence is that of 4-hydroxy-3-methylbut-2-enyl diphosphate reductase from Pectobacterium atrosepticum (strain SCRI 1043 / ATCC BAA-672) (Erwinia carotovora subsp. atroseptica).